The following is a 38-amino-acid chain: Large ribosomal subunit protein bL36 (38 aa).

It belongs to the bacterial ribosomal protein bL36 family.

The chain is Large ribosomal subunit protein bL36 from Alcanivorax borkumensis (strain ATCC 700651 / DSM 11573 / NCIMB 13689 / SK2).